Here is a 690-residue protein sequence, read N- to C-terminus: Protein arginine N-methyltransferase 7 (690 aa).

2 SAM-dependent MTase PRMT-type domains span residues 14-357 (QNSW…YSLW) and 366-690 (TKSV…QKKL).

This sequence belongs to the class I-like SAM-binding methyltransferase superfamily. Protein arginine N-methyltransferase family. PRMT7 subfamily.

Essential arginine methyltransferase that can both catalyze the formation of omega-N monomethylarginine (MMA) and symmetrical dimethylarginine (sDMA). Specifically mediates the symmetrical dimethylation of arginine residues in the small nuclear ribonucleoproteins SmD1 and SmD3. This chain is Protein arginine N-methyltransferase 7 (Art7), found in Drosophila erecta (Fruit fly).